Here is a 53-residue protein sequence, read N- to C-terminus: Large ribosomal subunit protein eL24 (53 aa).

Zn(2+) is bound by residues cysteine 4, cysteine 7, cysteine 30, and cysteine 34. The C4-type zinc finger occupies 4-34; that stretch reads CSFCNKEIEEGTGKMYVKKDGSIYFFCSSKC.

Belongs to the eukaryotic ribosomal protein eL24 family. Part of the 50S ribosomal subunit. Forms a cluster with proteins L3 and L14. The cofactor is Zn(2+).

Functionally, binds to the 23S rRNA. The polypeptide is Large ribosomal subunit protein eL24 (Methanobrevibacter smithii (strain ATCC 35061 / DSM 861 / OCM 144 / PS)).